The chain runs to 141 residues: Large ribosomal subunit protein uL11 (141 aa).

This sequence belongs to the universal ribosomal protein uL11 family. As to quaternary structure, part of the ribosomal stalk of the 50S ribosomal subunit. Interacts with L10 and the large rRNA to form the base of the stalk. L10 forms an elongated spine to which L12 dimers bind in a sequential fashion forming a multimeric L10(L12)X complex. In terms of processing, one or more lysine residues are methylated.

Functionally, forms part of the ribosomal stalk which helps the ribosome interact with GTP-bound translation factors. This Leptospira biflexa serovar Patoc (strain Patoc 1 / Ames) protein is Large ribosomal subunit protein uL11.